A 257-amino-acid polypeptide reads, in one-letter code: Pyrroline-5-carboxylate reductase (257 aa).

This sequence belongs to the pyrroline-5-carboxylate reductase family.

The protein localises to the cytoplasm. The enzyme catalyses L-proline + NADP(+) = (S)-1-pyrroline-5-carboxylate + NADPH + 2 H(+). It catalyses the reaction L-proline + NAD(+) = (S)-1-pyrroline-5-carboxylate + NADH + 2 H(+). Its pathway is amino-acid biosynthesis; L-proline biosynthesis; L-proline from L-glutamate 5-semialdehyde: step 1/1. Its function is as follows. Catalyzes the reduction of 1-pyrroline-5-carboxylate (PCA) to L-proline. The chain is Pyrroline-5-carboxylate reductase from Helicobacter pylori (strain ATCC 700392 / 26695) (Campylobacter pylori).